The sequence spans 151 residues: NADPH-dependent 7-cyano-7-deazaguanine reductase (151 aa).

The active-site Thioimide intermediate is C51. D58 functions as the Proton donor in the catalytic mechanism. Substrate-binding positions include 73 to 75 (VES) and 92 to 93 (HE).

This sequence belongs to the GTP cyclohydrolase I family. QueF type 1 subfamily.

Its subcellular location is the cytoplasm. The catalysed reaction is 7-aminomethyl-7-carbaguanine + 2 NADP(+) = 7-cyano-7-deazaguanine + 2 NADPH + 3 H(+). Its pathway is tRNA modification; tRNA-queuosine biosynthesis. Functionally, catalyzes the NADPH-dependent reduction of 7-cyano-7-deazaguanine (preQ0) to 7-aminomethyl-7-deazaguanine (preQ1). The chain is NADPH-dependent 7-cyano-7-deazaguanine reductase from Bacteroides fragilis (strain YCH46).